An 86-amino-acid chain; its full sequence is Small ribosomal subunit protein uS17 (86 aa).

It belongs to the universal ribosomal protein uS17 family. As to quaternary structure, part of the 30S ribosomal subunit.

Its function is as follows. One of the primary rRNA binding proteins, it binds specifically to the 5'-end of 16S ribosomal RNA. This is Small ribosomal subunit protein uS17 from Roseiflexus sp. (strain RS-1).